A 350-amino-acid polypeptide reads, in one-letter code: Methionine import ATP-binding protein MetN (350 aa).

Residues 9 to 245 (LKDVDVEFHG…PQQQLTKDFI (237 aa)) form the ABC transporter domain. 43-50 (GYSGAGKS) lines the ATP pocket.

The protein belongs to the ABC transporter superfamily. Methionine importer (TC 3.A.1.24) family. As to quaternary structure, the complex is composed of two ATP-binding proteins (MetN), two transmembrane proteins (MetI) and a solute-binding protein (MetQ).

It localises to the cell membrane. The enzyme catalyses L-methionine(out) + ATP + H2O = L-methionine(in) + ADP + phosphate + H(+). The catalysed reaction is D-methionine(out) + ATP + H2O = D-methionine(in) + ADP + phosphate + H(+). In terms of biological role, part of the ABC transporter complex MetNIQ involved in methionine import. Responsible for energy coupling to the transport system. The polypeptide is Methionine import ATP-binding protein MetN (Lacticaseibacillus paracasei (strain ATCC 334 / BCRC 17002 / CCUG 31169 / CIP 107868 / KCTC 3260 / NRRL B-441) (Lactobacillus paracasei)).